The primary structure comprises 313 residues: tRNA dimethylallyltransferase (313 aa).

10 to 17 contributes to the ATP binding site; it reads GPTAVGKS. 12–17 provides a ligand contact to substrate; it reads TAVGKS. The tract at residues 35 to 38 is interaction with substrate tRNA; it reads DSTQ.

It belongs to the IPP transferase family. Monomer. Mg(2+) serves as cofactor.

The enzyme catalyses adenosine(37) in tRNA + dimethylallyl diphosphate = N(6)-dimethylallyladenosine(37) in tRNA + diphosphate. Functionally, catalyzes the transfer of a dimethylallyl group onto the adenine at position 37 in tRNAs that read codons beginning with uridine, leading to the formation of N6-(dimethylallyl)adenosine (i(6)A). This is tRNA dimethylallyltransferase from Oceanobacillus iheyensis (strain DSM 14371 / CIP 107618 / JCM 11309 / KCTC 3954 / HTE831).